Reading from the N-terminus, the 146-residue chain is MGRFIFVSFGLLVVFLSLSGTAADCPSDWSSYEGHCYKPFDEPKTWADAEKFCTQQHKGSHLASFHSSEEADFVVTLTTPSLKTDLVWIGLKNIWNGCYWKWSDGTKLDYKDWREQFECLVSRTVNNEWLSMDCGTTCSFVCKFQA.

A signal peptide spans 1–23 (MGRFIFVSFGLLVVFLSLSGTAA). The C-type lectin domain maps to 24 to 146 (DCPSDWSSYE…TCSFVCKFQA (123 aa)). 3 disulfide bridges follow: Cys25–Cys36, Cys53–Cys142, and Cys119–Cys134. Residues Ser64 and Glu70 each contribute to the Ca(2+) site.

Belongs to the snaclec family. In terms of assembly, heterodimer of subunits A and B; disulfide-linked. In terms of tissue distribution, expressed by the venom gland.

It localises to the secreted. Functionally, anticoagulant protein which binds to the gamma-carboxyglutamic acid-domain regions of factor IX (F9) and factor X (F10) in the presence of calcium with a 1 to 1 stoichiometry. Also inhibits platelet aggregation by binding to platelet glycoprotein Ibalpha (GP1BA) and functioning as a blocker of von Willebrand factor (VWF). Is devoid of hemorrhagic and lethal activities. Possesses antithrombotic and thrombolytic activities. Also hydrolyzes the Aalpha-chain of fibrinogen (FGA). Does not affect the Bbeta-chain (FGB) and the gamma chain (FGG). This Deinagkistrodon acutus (Hundred-pace snake) protein is Snaclec agkisacutacin subunit B.